The following is a 490-amino-acid chain: GTPase Der (490 aa).

EngA-type G domains follow at residues 3–166 (PVVA…MEDL) and 203–376 (IKLA…DSST). GTP is bound by residues 9 to 16 (GRPNVGKS), 56 to 60 (DTGGI), 118 to 121 (NKTD), 209 to 216 (GRPNVGKS), 256 to 260 (DTAGV), and 321 to 324 (NKWD). In terms of domain architecture, KH-like spans 377–461 (RRVGTSMLTR…PIRIQFKEGE (85 aa)).

This sequence belongs to the TRAFAC class TrmE-Era-EngA-EngB-Septin-like GTPase superfamily. EngA (Der) GTPase family. As to quaternary structure, associates with the 50S ribosomal subunit.

Its function is as follows. GTPase that plays an essential role in the late steps of ribosome biogenesis. This Escherichia coli O7:K1 (strain IAI39 / ExPEC) protein is GTPase Der.